An 87-amino-acid chain; its full sequence is DNA-directed RNA polymerase subunit Rpo5 (87 aa).

Belongs to the archaeal Rpo5/eukaryotic RPB5 RNA polymerase subunit family. As to quaternary structure, part of the RNA polymerase complex.

The protein localises to the cytoplasm. The catalysed reaction is RNA(n) + a ribonucleoside 5'-triphosphate = RNA(n+1) + diphosphate. DNA-dependent RNA polymerase (RNAP) catalyzes the transcription of DNA into RNA using the four ribonucleoside triphosphates as substrates. This chain is DNA-directed RNA polymerase subunit Rpo5, found in Thermoplasma volcanium (strain ATCC 51530 / DSM 4299 / JCM 9571 / NBRC 15438 / GSS1).